The chain runs to 542 residues: CTP synthase (542 aa).

The interval 1–269 is amidoligase domain; the sequence is MQTKYIFITG…DALICELLHL (269 aa). Serine 14 is a binding site for CTP. Position 14 (serine 14) interacts with UTP. ATP-binding positions include 15–20 and aspartate 72; that span reads SLGKGL. Positions 72 and 143 each coordinate Mg(2+). CTP-binding positions include 150 to 152, 189 to 194, and lysine 225; these read DIE and KTKPSQ. UTP contacts are provided by residues 189–194 and lysine 225; that span reads KTKPSQ. 241-243 provides a ligand contact to ATP; that stretch reads KDV. The region spanning 301–538 is the Glutamine amidotransferase type-1 domain; the sequence is YVQHQDAYKS…IQAMIIYHKS (238 aa). Glycine 358 is an L-glutamine binding site. Cysteine 385 (nucleophile; for glutamine hydrolysis) is an active-site residue. L-glutamine contacts are provided by residues 386-389, glutamate 409, and arginine 466; that span reads LGMQ. Residues histidine 511 and glutamate 513 contribute to the active site.

The protein belongs to the CTP synthase family. As to quaternary structure, homotetramer.

The enzyme catalyses UTP + L-glutamine + ATP + H2O = CTP + L-glutamate + ADP + phosphate + 2 H(+). It carries out the reaction L-glutamine + H2O = L-glutamate + NH4(+). It catalyses the reaction UTP + NH4(+) + ATP = CTP + ADP + phosphate + 2 H(+). The protein operates within pyrimidine metabolism; CTP biosynthesis via de novo pathway; CTP from UDP: step 2/2. Allosterically activated by GTP, when glutamine is the substrate; GTP has no effect on the reaction when ammonia is the substrate. The allosteric effector GTP functions by stabilizing the protein conformation that binds the tetrahedral intermediate(s) formed during glutamine hydrolysis. Inhibited by the product CTP, via allosteric rather than competitive inhibition. In terms of biological role, catalyzes the ATP-dependent amination of UTP to CTP with either L-glutamine or ammonia as the source of nitrogen. Regulates intracellular CTP levels through interactions with the four ribonucleotide triphosphates. The chain is CTP synthase from Protochlamydia amoebophila (strain UWE25).